A 332-amino-acid chain; its full sequence is MATIYYEKDADLKILKGKKIAIIGYGSQGMAQSQSLKDSGLDVVVGLRKGGASWEQAKKDGMKVATIEEAAQQADYIQMLIPDELQGKVYHEQIEPYMKKGKILGFSHGFNIHYGMIKPGKDIDVVMIAPKSPGHLVRRMYQQGAGVPALVAIQQDASKKALQYALAYAAGIGCTRAGVLATTFKEETETDLFGEQVDLCGGCTEMVKASFETLVNAGYQPEIAYFETLHELKLIVDLMYEGGMAAMWDSVSDTAQYGGMTRGRRIINEQSRMEMWRTLEEIQDGRFAREWVLENMAGRPHFNALTQQDAEHPIEIVGKELRSMMPWLKQKK.

In terms of domain architecture, KARI N-terminal Rossmann spans 1–182 (MATIYYEKDA…GCTRAGVLAT (182 aa)). NADP(+) contacts are provided by residues 25–28 (YGSQ), Arg48, Ser53, and 83–86 (DELQ). His108 is a catalytic residue. Gly134 lines the NADP(+) pocket. In terms of domain architecture, KARI C-terminal knotted spans 183–328 (TFKEETETDL…KELRSMMPWL (146 aa)). Asp191, Glu195, Glu227, and Glu231 together coordinate Mg(2+). Substrate is bound at residue Ser252.

The protein belongs to the ketol-acid reductoisomerase family. Mg(2+) serves as cofactor.

It carries out the reaction (2R)-2,3-dihydroxy-3-methylbutanoate + NADP(+) = (2S)-2-acetolactate + NADPH + H(+). It catalyses the reaction (2R,3R)-2,3-dihydroxy-3-methylpentanoate + NADP(+) = (S)-2-ethyl-2-hydroxy-3-oxobutanoate + NADPH + H(+). It participates in amino-acid biosynthesis; L-isoleucine biosynthesis; L-isoleucine from 2-oxobutanoate: step 2/4. The protein operates within amino-acid biosynthesis; L-valine biosynthesis; L-valine from pyruvate: step 2/4. Functionally, involved in the biosynthesis of branched-chain amino acids (BCAA). Catalyzes an alkyl-migration followed by a ketol-acid reduction of (S)-2-acetolactate (S2AL) to yield (R)-2,3-dihydroxy-isovalerate. In the isomerase reaction, S2AL is rearranged via a Mg-dependent methyl migration to produce 3-hydroxy-3-methyl-2-ketobutyrate (HMKB). In the reductase reaction, this 2-ketoacid undergoes a metal-dependent reduction by NADPH to yield (R)-2,3-dihydroxy-isovalerate. In Methanocella arvoryzae (strain DSM 22066 / NBRC 105507 / MRE50), this protein is Ketol-acid reductoisomerase (NADP(+)).